Here is a 396-residue protein sequence, read N- to C-terminus: Glideosome-associated protein 50 (396 aa).

Residues 1–369 are Lumenal-facing; sequence MNYCKTTFHI…PMGNKDTFVR (369 aa). The a metal cation site is built by H195 and H256. Residues 370–390 form a helical membrane-spanning segment; that stretch reads VVGTIGILIGSVIVFIGASSF. The Cytoplasmic portion of the chain corresponds to 391–396; it reads LSKNMK.

Belongs to the metallophosphoesterase superfamily. Purple acid phosphatase family. As to quaternary structure, component of the glideosome complex composed of GAP50, GAP45, MTIP and MyoA; the complex is formed during the late schizont stage and in merozoites. MyoA, MTIP and GAP45 probably form an initial complex in the cytoplasm which is then recruited to the outer face of the inner membrane complex via the interaction with GAP50. Interacts with GAP45; the interaction is independent of GAP45 phosphorylation status and can also occur independently of the formation of the glideosome complex. Interacts with human factor H isoform CFH (via sushi 6-7 domains) and isoform FHL-1 (via sushi 6-7 domains); the interaction occurs in the vector mosquito midgut at the surface of activated gametocytes; the interaction protects the parasite from alternative complement pathway-mediated elimination. A metal cation serves as cofactor. The N-terminus signal is likely to be cleaved.

Its subcellular location is the inner membrane complex. The protein resides in the cell membrane. The protein localises to the endoplasmic reticulum membrane. It carries out the reaction a phosphate monoester + H2O = an alcohol + phosphate. Its activity is regulated as follows. Activity is independent of metal ions. In terms of biological role, component of the glideosome complex, an inner membrane complex structure involved in parasite gliding motility and host cell invasion. During the asexual blood stage, may play a role in the assembly and anchoring of the glideosome complex to the inner membrane complex. During the sexual stage in the vector mosquito midgut, protects gametocytes against host alternative complement pathway-mediated elimination by interacting with host complement inhibitor factor H. Has phosphatase activity towards nucleotides such as ATP, vitamins B1 and B6, phosphorylated sugars, glycerol phosphates and inositol triphosphates. However, the phosphatase activity is controversial. In Plasmodium falciparum (isolate 3D7), this protein is Glideosome-associated protein 50.